The primary structure comprises 336 residues: 3-isopropylmalate dehydrogenase (336 aa).

R87, R97, R121, and D211 together coordinate substrate. Mg(2+) contacts are provided by D211, D235, and D239. Residue 271–283 (GSAPDIAGQGIAD) participates in NAD(+) binding.

The protein belongs to the isocitrate and isopropylmalate dehydrogenases family. LeuB type 2 subfamily. In terms of assembly, homodimer. Requires Mg(2+) as cofactor. Mn(2+) is required as a cofactor.

The protein localises to the cytoplasm. The catalysed reaction is (2R,3S)-3-isopropylmalate + NAD(+) = 4-methyl-2-oxopentanoate + CO2 + NADH. It functions in the pathway amino-acid biosynthesis; L-leucine biosynthesis; L-leucine from 3-methyl-2-oxobutanoate: step 3/4. Functionally, catalyzes the oxidation of 3-carboxy-2-hydroxy-4-methylpentanoate (3-isopropylmalate) to 3-carboxy-4-methyl-2-oxopentanoate. The product decarboxylates to 4-methyl-2 oxopentanoate. The sequence is that of 3-isopropylmalate dehydrogenase (leuB) from Mycobacterium tuberculosis (strain CDC 1551 / Oshkosh).